We begin with the raw amino-acid sequence, 422 residues long: Serine--tRNA ligase (422 aa).

231 to 233 (TSE) contributes to the L-serine binding site. Residue 262-264 (RQE) participates in ATP binding. Residue glutamate 285 participates in L-serine binding. 349–352 (EISS) serves as a coordination point for ATP. Residue serine 384 coordinates L-serine.

The protein belongs to the class-II aminoacyl-tRNA synthetase family. Type-1 seryl-tRNA synthetase subfamily. Homodimer. The tRNA molecule binds across the dimer.

The protein localises to the cytoplasm. The enzyme catalyses tRNA(Ser) + L-serine + ATP = L-seryl-tRNA(Ser) + AMP + diphosphate + H(+). It catalyses the reaction tRNA(Sec) + L-serine + ATP = L-seryl-tRNA(Sec) + AMP + diphosphate + H(+). It functions in the pathway aminoacyl-tRNA biosynthesis; selenocysteinyl-tRNA(Sec) biosynthesis; L-seryl-tRNA(Sec) from L-serine and tRNA(Sec): step 1/1. Catalyzes the attachment of serine to tRNA(Ser). Is also able to aminoacylate tRNA(Sec) with serine, to form the misacylated tRNA L-seryl-tRNA(Sec), which will be further converted into selenocysteinyl-tRNA(Sec). The polypeptide is Serine--tRNA ligase (Mycoplasma capricolum subsp. capricolum (strain California kid / ATCC 27343 / NCTC 10154)).